We begin with the raw amino-acid sequence, 1354 residues long: Ubiquitin carboxyl-terminal hydrolase 47 (1354 aa).

Polar residues predominate over residues 114-133 (EQPQLASDESGTADSSGLDD). A disordered region spans residues 114–139 (EQPQLASDESGTADSSGLDDSTQEKF). A USP domain is found at 174–549 (VGLVNQAMTC…NAYMLMYRLK (376 aa)). Cys183 serves as the catalytic Nucleophile. The segment at 408–438 (DVEDEKSPQTDSCTDSGAENEGSCHSDQMSN) is disordered. Residues 416–438 (QTDSCTDSGAENEGSCHSDQMSN) are compositionally biased toward polar residues. The Proton acceptor role is filled by His488. Polar residues predominate over residues 863-882 (LSLQQHQDGGNGDSSKSTEG). 2 disordered regions span residues 863–1004 (LSLQ…ESGK) and 1314–1335 (LAKK…SPRK). The span at 920 to 930 (PEERSDSDVNN) shows a compositional bias: basic and acidic residues. Positions 933 to 949 (STSSVDSDILSSSHSSD) are enriched in low complexity. The span at 977-986 (KANDGKKETW) shows a compositional bias: basic and acidic residues. The span at 987 to 1000 (DTAEEDSGTDSEYD) shows a compositional bias: acidic residues.

The protein belongs to the peptidase C19 family. USP47 subfamily.

The protein localises to the cytoplasm. It carries out the reaction Thiol-dependent hydrolysis of ester, thioester, amide, peptide and isopeptide bonds formed by the C-terminal Gly of ubiquitin (a 76-residue protein attached to proteins as an intracellular targeting signal).. Its function is as follows. Ubiquitin-specific protease that specifically deubiquitinates monoubiquitinated DNA polymerase beta (polb), stabilizing polb thereby playing a role in base-excision repair (BER). The polypeptide is Ubiquitin carboxyl-terminal hydrolase 47 (usp47) (Xenopus tropicalis (Western clawed frog)).